We begin with the raw amino-acid sequence, 200 residues long: dTTP/UTP pyrophosphatase (200 aa).

Aspartate 72 acts as the Proton acceptor in catalysis.

This sequence belongs to the Maf family. YhdE subfamily. A divalent metal cation serves as cofactor.

The protein resides in the cytoplasm. The catalysed reaction is dTTP + H2O = dTMP + diphosphate + H(+). It catalyses the reaction UTP + H2O = UMP + diphosphate + H(+). Functionally, nucleoside triphosphate pyrophosphatase that hydrolyzes dTTP and UTP. May have a dual role in cell division arrest and in preventing the incorporation of modified nucleotides into cellular nucleic acids. The protein is dTTP/UTP pyrophosphatase of Pseudomonas savastanoi pv. phaseolicola (strain 1448A / Race 6) (Pseudomonas syringae pv. phaseolicola (strain 1448A / Race 6)).